The sequence spans 267 residues: Triosephosphate isomerase (267 aa).

12-14 (NWK) is a substrate binding site. H104 (electrophile) is an active-site residue. Residue E176 is the Proton acceptor of the active site. Substrate contacts are provided by residues G182, S222, and 243–244 (GG).

The protein belongs to the triosephosphate isomerase family. As to quaternary structure, homodimer.

Its subcellular location is the cytoplasm. The enzyme catalyses D-glyceraldehyde 3-phosphate = dihydroxyacetone phosphate. The protein operates within carbohydrate biosynthesis; gluconeogenesis. It participates in carbohydrate degradation; glycolysis; D-glyceraldehyde 3-phosphate from glycerone phosphate: step 1/1. Involved in the gluconeogenesis. Catalyzes stereospecifically the conversion of dihydroxyacetone phosphate (DHAP) to D-glyceraldehyde-3-phosphate (G3P). This chain is Triosephosphate isomerase, found in Bifidobacterium longum (strain DJO10A).